A 318-amino-acid polypeptide reads, in one-letter code: Cytochrome f (318 aa).

The N-terminal stretch at 1–34 (MQNRNFFEYPKNWIILLIPIFTTFNLLFTSDCYA) is a signal peptide. Positions 35, 55, 58, and 59 each coordinate heme. Residues 284–303 (LQGLLVFLFLVVLAQVFLVL) form a helical membrane-spanning segment.

It belongs to the cytochrome f family. The 4 large subunits of the cytochrome b6-f complex are cytochrome b6, subunit IV (17 kDa polypeptide, petD), cytochrome f and the Rieske protein, while the 4 small subunits are PetG, PetL, PetM and PetN. The complex functions as a dimer. The cofactor is heme.

It is found in the plastid. The protein resides in the chloroplast thylakoid membrane. In terms of biological role, component of the cytochrome b6-f complex, which mediates electron transfer between photosystem II (PSII) and photosystem I (PSI), cyclic electron flow around PSI, and state transitions. In Chaetosphaeridium globosum (Charophycean green alga), this protein is Cytochrome f.